The sequence spans 408 residues: Subtilisin-like protease 6 (408 aa).

The N-terminal stretch at Met-1–Gly-20 is a signal peptide. Residues Ala-21–Ile-123 constitute a propeptide that is removed on maturation. In terms of domain architecture, Inhibitor I9 spans Lys-36–Lys-119. The region spanning Ser-131–Lys-408 is the Peptidase S8 domain. Active-site charge relay system residues include Asp-163 and His-194. N-linked (GlcNAc...) asparagine glycans are attached at residues Asn-248, Asn-260, and Asn-345. Ser-354 serves as the catalytic Charge relay system. Asn-404 carries N-linked (GlcNAc...) asparagine glycosylation.

Belongs to the peptidase S8 family.

It localises to the secreted. Functionally, secreted subtilisin-like serine protease with keratinolytic activity that contributes to pathogenicity. This Arthroderma gypseum (strain ATCC MYA-4604 / CBS 118893) (Microsporum gypseum) protein is Subtilisin-like protease 6 (SUB6).